The following is a 1241-amino-acid chain: DNA-directed RNA polymerase subunit beta (1241 aa).

Residues Pro1195–Asp1219 form a disordered region.

This sequence belongs to the RNA polymerase beta chain family. The RNAP catalytic core consists of 2 alpha, 1 beta, 1 beta' and 1 omega subunit. When a sigma factor is associated with the core the holoenzyme is formed, which can initiate transcription.

The enzyme catalyses RNA(n) + a ribonucleoside 5'-triphosphate = RNA(n+1) + diphosphate. Functionally, DNA-dependent RNA polymerase catalyzes the transcription of DNA into RNA using the four ribonucleoside triphosphates as substrates. The protein is DNA-directed RNA polymerase subunit beta of Clostridium acetobutylicum (strain ATCC 824 / DSM 792 / JCM 1419 / IAM 19013 / LMG 5710 / NBRC 13948 / NRRL B-527 / VKM B-1787 / 2291 / W).